An 835-amino-acid polypeptide reads, in one-letter code: Lon protease (835 aa).

The region spanning 36–234 (VHVFPLLRRP…KALILLKKEL (199 aa)) is the Lon N-terminal domain. ATP is bound at residue 387–394 (GPPGVGKT). The Lon proteolytic domain occupies 646 to 828 (RTPVGVCMGL…DQVFKISFPN (183 aa)). Active-site residues include Ser-734 and Lys-777.

The protein belongs to the peptidase S16 family. As to quaternary structure, homohexamer. Organized in a ring with a central cavity.

The protein resides in the cytoplasm. It catalyses the reaction Hydrolysis of proteins in presence of ATP.. Functionally, ATP-dependent serine protease that mediates the selective degradation of mutant and abnormal proteins as well as certain short-lived regulatory proteins. Required for cellular homeostasis and for survival from DNA damage and developmental changes induced by stress. Degrades polypeptides processively to yield small peptide fragments that are 5 to 10 amino acids long. Binds to DNA in a double-stranded, site-specific manner. In Protochlamydia amoebophila (strain UWE25), this protein is Lon protease.